The chain runs to 391 residues: Carbamoyl phosphate synthase small chain (391 aa).

The segment at 1–202 is CPSase; it reads MTQPAILVLE…AHASAGSGEE (202 aa). Positions 47, 254, and 256 each coordinate L-glutamine. The 186-residue stretch at 206-391 folds into the Glutamine amidotransferase type-1 domain; the sequence is KVVAYDYGVK…RFVDLMAARA (186 aa). The Nucleophile role is filled by Cys-282. Positions 283, 286, 324, 326, and 327 each coordinate L-glutamine. Active-site residues include His-366 and Glu-368.

The protein belongs to the CarA family. As to quaternary structure, composed of two chains; the small (or glutamine) chain promotes the hydrolysis of glutamine to ammonia, which is used by the large (or ammonia) chain to synthesize carbamoyl phosphate. Tetramer of heterodimers (alpha,beta)4.

The enzyme catalyses hydrogencarbonate + L-glutamine + 2 ATP + H2O = carbamoyl phosphate + L-glutamate + 2 ADP + phosphate + 2 H(+). The catalysed reaction is L-glutamine + H2O = L-glutamate + NH4(+). It functions in the pathway amino-acid biosynthesis; L-arginine biosynthesis; carbamoyl phosphate from bicarbonate: step 1/1. Its pathway is pyrimidine metabolism; UMP biosynthesis via de novo pathway; (S)-dihydroorotate from bicarbonate: step 1/3. In terms of biological role, small subunit of the glutamine-dependent carbamoyl phosphate synthetase (CPSase). CPSase catalyzes the formation of carbamoyl phosphate from the ammonia moiety of glutamine, carbonate, and phosphate donated by ATP, constituting the first step of 2 biosynthetic pathways, one leading to arginine and/or urea and the other to pyrimidine nucleotides. The small subunit (glutamine amidotransferase) binds and cleaves glutamine to supply the large subunit with the substrate ammonia. This chain is Carbamoyl phosphate synthase small chain, found in Xanthomonas axonopodis pv. citri (strain 306).